The following is a 320-amino-acid chain: tRNA uridine(34) hydroxylase (320 aa).

Residues 123–217 enclose the Rhodanese domain; the sequence is EDENTVILDA…YGKDPETKGQ (95 aa). Cys177 functions as the Cysteine persulfide intermediate in the catalytic mechanism.

Belongs to the TrhO family.

The enzyme catalyses uridine(34) in tRNA + AH2 + O2 = 5-hydroxyuridine(34) in tRNA + A + H2O. Catalyzes oxygen-dependent 5-hydroxyuridine (ho5U) modification at position 34 in tRNAs. In Staphylococcus epidermidis (strain ATCC 12228 / FDA PCI 1200), this protein is tRNA uridine(34) hydroxylase.